The primary structure comprises 222 residues: Germin-like protein subfamily 1 member 14 (222 aa).

The N-terminal stretch at 1-22 (MRFSKSLILITLSALVISFAEA) is a signal peptide. Residues Cys-32 and Cys-49 are joined by a disulfide bond. Positions 63 to 214 (SGLNQAGTTN…AFQLDVNVVK (152 aa)) constitute a Cupin type-1 domain. The N-linked (GlcNAc...) asparagine glycan is linked to Asn-78. His-111, His-113, Glu-118, and His-160 together coordinate Mn(2+).

It belongs to the germin family. In terms of assembly, oligomer (believed to be a pentamer but probably hexamer).

The protein localises to the secreted. The protein resides in the extracellular space. It localises to the apoplast. Its function is as follows. May play a role in plant defense. Probably has no oxalate oxidase activity even if the active site is conserved. In Arabidopsis thaliana (Mouse-ear cress), this protein is Germin-like protein subfamily 1 member 14.